The chain runs to 86 residues: Photosystem I reaction center subunit PsaK (86 aa).

The next 2 membrane-spanning stretches (helical) occupy residues 15–35 and 57–77; these read SWSI…IGLG and GLPE…GAII.

Belongs to the PsaG/PsaK family.

The protein resides in the plastid. It localises to the chloroplast thylakoid membrane. The sequence is that of Photosystem I reaction center subunit PsaK from Gracilaria tenuistipitata var. liui (Red alga).